Consider the following 678-residue polypeptide: RNA helicase NPH-II (678 aa).

Residues 175–351 form the Helicase ATP-binding domain; it reads FESWIHHVPV…EFFTESVFVH (177 aa). 188-195 is a binding site for ATP; the sequence is GDTGVGKT. A DEXH box motif is present at residues 300 to 303; it reads DEVH. One can recognise a Helicase C-terminal domain in the interval 371 to 546; it reads SLNKFMYIEE…VFDLQLPEDL (176 aa).

The protein belongs to the DEAD box helicase family. DEAH subfamily. Monomer.

It is found in the virion. It carries out the reaction ATP + H2O = ADP + phosphate + H(+). In terms of biological role, NTP-dependent helicase that catalyzes unidirectional unwinding of 3'tailed duplex RNAs and plays an important role during transcription of early mRNAs, presumably by preventing R-loop formation behind the elongating RNA polymerase. Might also play a role in the export of newly synthesized mRNA chains out of the core into the cytoplasm. Required for replication and propagation of viral particles. The sequence is that of RNA helicase NPH-II (OPG084) from Oryctolagus cuniculus (Rabbit).